A 119-amino-acid chain; its full sequence is Large ribosomal subunit protein bL19 (119 aa).

Belongs to the bacterial ribosomal protein bL19 family.

Functionally, this protein is located at the 30S-50S ribosomal subunit interface and may play a role in the structure and function of the aminoacyl-tRNA binding site. This chain is Large ribosomal subunit protein bL19, found in Photobacterium profundum (strain SS9).